Here is a 313-residue protein sequence, read N- to C-terminus: Tyrosine recombinase slr0733 (313 aa).

A Core-binding (CB) domain is found at asparagine 7–arginine 101. Residues arginine 122 to aspartate 307 form the Tyr recombinase domain. Residues arginine 162, lysine 188, histidine 258, arginine 261, and histidine 285 contribute to the active site. Tyrosine 294 (O-(3'-phospho-DNA)-tyrosine intermediate) is an active-site residue.

The protein belongs to the 'phage' integrase family.

The protein resides in the cytoplasm. Site-specific tyrosine recombinase, which acts by catalyzing the cutting and rejoining of the recombining DNA molecules. The polypeptide is Tyrosine recombinase slr0733 (Synechocystis sp. (strain ATCC 27184 / PCC 6803 / Kazusa)).